The sequence spans 344 residues: Beta-1,4-galactosyltransferase 4 (344 aa).

The Cytoplasmic portion of the chain corresponds to 1 to 12 (MGCNPPYHLSYR). A helical; Signal-anchor for type II membrane protein transmembrane segment spans residues 13–38 (LRLLLLFTLCLTVVGWATSNYFVGAI). Residues 39–344 (QVIPKAKDFM…NITVDFWTAA (306 aa)) are Lumenal-facing. A disulfide bridge connects residues C77 and C118. Residues 129–133 (PHRNR), 168–170 (FNR), and 195–196 (VD) contribute to the UDP-alpha-D-galactose site. C189 and C208 are joined by a disulfide. Mn(2+) is bound at residue D196. The N-linked (GlcNAc...) asparagine glycan is linked to N220. Y224 and W256 together coordinate UDP-alpha-D-galactose. 258-261 (GEDD) provides a ligand contact to N-acetyl-D-glucosamine. Residue H289 coordinates Mn(2+). 289–291 (HTR) is a binding site for UDP-alpha-D-galactose. R301 lines the N-acetyl-D-glucosamine pocket. N335 carries N-linked (GlcNAc...) asparagine glycosylation.

It belongs to the glycosyltransferase 7 family. In terms of assembly, interacts with SLC35A2/UGT1. Mn(2+) serves as cofactor.

It localises to the golgi apparatus membrane. The protein localises to the secreted. The enzyme catalyses N-acetyl-D-glucosamine + UDP-alpha-D-galactose = beta-D-galactosyl-(1-&gt;4)-N-acetyl-D-glucosamine + UDP + H(+). The catalysed reaction is a beta-D-GlcNAc-(1-&gt;3)-beta-D-Gal-(1-&gt;4)-beta-D-Glc-(1&lt;-&gt;1)-Cer(d18:1(4E)) + UDP-alpha-D-galactose = a neolactoside nLc4Cer(d18:1(4E)) + UDP + H(+). It catalyses the reaction 3-O-{beta-D-galactosyl-(1-&gt;3)-[6-O-sulfo-N-acetyl-beta-D-glucosaminyl-(1-&gt;6)]-N-acetyl-alpha-D-galactosaminyl}-L-seryl-[protein] + UDP-alpha-D-galactose = 3-O-{beta-D-galactosyl-(1-&gt;3)-[beta-D-galactosyl-(1-&gt;4)-6-O-sulfo-N-acetyl-beta-D-glucosaminyl-(1-&gt;6)]-N-acetyl-alpha-D-galactosaminyl}-L-seryl-[protein] + UDP + H(+). It carries out the reaction 3-O-{beta-D-galactosyl-(1-&gt;3)-[6-O-sulfo-N-acetyl-beta-D-glucosaminyl-(1-&gt;6)]-N-acetyl-alpha-D-galactosaminyl}-L-threonyl-[protein] + UDP-alpha-D-galactose = 3-O-{beta-D-galactosyl-(1-&gt;3)-[beta-D-galactosyl-(1-&gt;4)-6-O-sulfo-N-acetyl-beta-D-glucosaminyl-(1-&gt;6)]-N-acetyl-alpha-D-galactosaminyl}-L-threonyl-[protein] + UDP + H(+). Its pathway is protein modification; protein glycosylation. It functions in the pathway glycolipid biosynthesis. Galactose (Gal) transferase involved in the synthesis of terminal N-acetyllactosamine (LacNac) unit present on glycan chains of glycoproteins and glycosphingolipids. Catalyzes the transfer of Gal residue via a beta1-&gt;4 linkage from UDP-Gal to the non-reducing terminal N-acetyl glucosamine 6-O-sulfate (6-O-sulfoGlcNAc) in the linearly growing chain of both N- and O-linked keratan sulfate proteoglycans. Cooperates with B3GNT7 N-acetyl glucosamine transferase and CHST6 and CHST1 sulfotransferases to construct and elongate mono- and disulfated disaccharide units [-&gt;3Galbeta1-&gt;4(6-sulfoGlcNAcbeta)1-&gt;] and [-&gt;3(6-sulfoGalbeta)1-&gt;4(6-sulfoGlcNAcbeta)1-&gt;] within keratan sulfate polymer. Transfers Gal residue via a beta1-&gt;4 linkage to terminal 6-O-sulfoGlcNAc within the LacNac unit of core 2 O-glycans forming 6-sulfo-sialyl-Lewis X (sLex). May contribute to the generation of sLex epitope on mucin-type glycoproteins that serve as ligands for SELL/L-selectin, a major regulator of leukocyte migration. In the biosynthesis pathway of neolacto-series glycosphingolipids, transfers Gal residue via a beta1-&gt;4 linkage to terminal GlcNAc of a lactotriaosylceramide (Lc3Cer) acceptor to form a neolactotetraosylceramide. The chain is Beta-1,4-galactosyltransferase 4 from Mus musculus (Mouse).